A 500-amino-acid chain; its full sequence is Formate-nitrite transporter 3 (500 aa).

At M1–Q31 the chain is on the cytoplasmic side. A helical membrane pass occupies residues A32–A52. The Extracellular portion of the chain corresponds to Y53 to K69. A helical membrane pass occupies residues F70–L90. At F91–C113 the chain is on the cytoplasmic side. Residues I114–L134 form a helical membrane-spanning segment. Residues S135 to Q164 lie on the Extracellular side of the membrane. A helical membrane pass occupies residues C165–A185. At S186–K192 the chain is on the cytoplasmic side. The chain crosses the membrane as a helical span at residues I193 to A213. Residues N214–N237 lie on the Extracellular side of the membrane. A helical transmembrane segment spans residues F238–W258. The Cytoplasmic segment spans residues Y259–I500. The disordered stretch occupies residues P411–I500. Basic and acidic residues-rich tracts occupy residues G428–E444 and F466–V485.

This sequence belongs to the FNT transporter (TC 1.A.16) family. Homopentamer.

It localises to the cell membrane. It catalyses the reaction (S)-lactate(in) + H(+)(in) = (S)-lactate(out) + H(+)(out). The enzyme catalyses formate(in) + H(+)(in) = formate(out) + H(+)(out). The catalysed reaction is pyruvate(out) + H(+)(out) = pyruvate(in) + H(+)(in). It carries out the reaction acetate(out) + H(+)(out) = acetate(in) + H(+)(in). Its activity is regulated as follows. Inhibited by p-chloromercuribenzene sulfonate (pCMBS). Methyl methanethiosulfonate (MMTS) inhibits L-lactate but not formate transport. Inhibited by the Malaria Box compound MMV007839. Inhibited by BH-296, BH-317, BH-326 and BH-388 compounds. Functionally, monocarboxylate-proton symporter; active in acidic-to-neutral pH range. Transports L-lactate and formate. This chain is Formate-nitrite transporter 3, found in Toxoplasma gondii (strain ATCC 50611 / Me49).